A 565-amino-acid chain; its full sequence is Periplasmic trehalase (565 aa).

A signal peptide spans 1-30 (MKSPTPSRPQKMALIPACIFLCFAALSVQA). Residues R152, 159 to 160 (WD), N196, 205 to 207 (RSQ), 277 to 279 (RPE), and G310 each bind substrate. Catalysis depends on proton donor/acceptor residues D312 and E496. E511 provides a ligand contact to substrate. The segment at 539 to 565 (CDNVPATRPLSESTTQPLKQKEAEPTP) is disordered.

The protein belongs to the glycosyl hydrolase 37 family. Monomer.

Its subcellular location is the periplasm. It carries out the reaction alpha,alpha-trehalose + H2O = alpha-D-glucose + beta-D-glucose. Provides the cells with the ability to utilize trehalose at high osmolarity by splitting it into glucose molecules that can subsequently be taken up by the phosphotransferase-mediated uptake system. This chain is Periplasmic trehalase, found in Escherichia coli (strain SMS-3-5 / SECEC).